Consider the following 394-residue polypeptide: Elongation factor Tu (394 aa).

Residues 10 to 204 (KPHVNVGTIG…HLDSYIPEPE (195 aa)) enclose the tr-type G domain. The tract at residues 19 to 26 (GHVDHGKT) is G1. 19–26 (GHVDHGKT) is a binding site for GTP. Thr26 lines the Mg(2+) pocket. The G2 stretch occupies residues 60 to 64 (GITIN). Positions 81-84 (DCPG) are G3. Residues 81-85 (DCPGH) and 136-139 (NKCD) contribute to the GTP site. The tract at residues 136-139 (NKCD) is G4. The interval 174–176 (SAL) is G5.

This sequence belongs to the TRAFAC class translation factor GTPase superfamily. Classic translation factor GTPase family. EF-Tu/EF-1A subfamily. Monomer.

The protein localises to the cytoplasm. It catalyses the reaction GTP + H2O = GDP + phosphate + H(+). Its function is as follows. GTP hydrolase that promotes the GTP-dependent binding of aminoacyl-tRNA to the A-site of ribosomes during protein biosynthesis. The sequence is that of Elongation factor Tu from Cronobacter sakazakii (strain ATCC BAA-894) (Enterobacter sakazakii).